The following is a 295-amino-acid chain: Light-independent protochlorophyllide reductase iron-sulfur ATP-binding protein (295 aa).

ATP contacts are provided by residues 10 to 15 (GIGKST) and Lys39. Ser14 lines the Mg(2+) pocket. [4Fe-4S] cluster is bound by residues Cys95 and Cys129. 180-181 (NR) contributes to the ATP binding site. The span at 275 to 289 (TKDKKENKKEDKENS) shows a compositional bias: basic and acidic residues. Residues 275–295 (TKDKKENKKEDKENSADFTWL) form a disordered region.

Belongs to the NifH/BchL/ChlL family. In terms of assembly, homodimer. Protochlorophyllide reductase is composed of three subunits; ChlL, ChlN and ChlB. [4Fe-4S] cluster is required as a cofactor.

Its subcellular location is the plastid. The protein localises to the chloroplast. The catalysed reaction is chlorophyllide a + oxidized 2[4Fe-4S]-[ferredoxin] + 2 ADP + 2 phosphate = protochlorophyllide a + reduced 2[4Fe-4S]-[ferredoxin] + 2 ATP + 2 H2O. It participates in porphyrin-containing compound metabolism; chlorophyll biosynthesis (light-independent). Its function is as follows. Component of the dark-operative protochlorophyllide reductase (DPOR) that uses Mg-ATP and reduced ferredoxin to reduce ring D of protochlorophyllide (Pchlide) to form chlorophyllide a (Chlide). This reaction is light-independent. The L component serves as a unique electron donor to the NB-component of the complex, and binds Mg-ATP. The sequence is that of Light-independent protochlorophyllide reductase iron-sulfur ATP-binding protein from Physcomitrium patens (Spreading-leaved earth moss).